Reading from the N-terminus, the 401-residue chain is Multidrug resistance protein MdtH (401 aa).

A run of 11 helical transmembrane segments spans residues 13–33, 34–54, 78–95, 99–116, 139–159, 165–185, 214–234, 243–263, 289–309, 340–360, and 365–385; these read YFLLFDNLLVVLGFFVVFPLI, SIHFVEQLGWAALVVGFALGL, MIVTGMLLRALGFAFIAL, PWILWLACILSALGGTLF, LLLMQDSAGAVIGALIGSWLL, FVCWTGAGVFVLAAIWNALFL, VLTLTGYFMLSVQVMLMFPII, AAVKWMYAIEATLSLTLLYPI, FPVGLIGEINTLFGLICLFYL, LGLALGGALGYTGGGWLYDTG, and IPQLPWFLLGIIGLITLYALH.

The protein belongs to the major facilitator superfamily. DHA1 family. MdtH (TC 2.A.1.2.21) subfamily.

It is found in the cell inner membrane. The chain is Multidrug resistance protein MdtH from Photorhabdus laumondii subsp. laumondii (strain DSM 15139 / CIP 105565 / TT01) (Photorhabdus luminescens subsp. laumondii).